The sequence spans 189 residues: B3 domain-containing protein At2g32645 (189 aa).

The segment at residues 33-133 (FNQVKTPDFL…KLCFALTPKI (101 aa)) is a DNA-binding region (TF-B3).

The protein resides in the nucleus. This is B3 domain-containing protein At2g32645 from Arabidopsis thaliana (Mouse-ear cress).